Consider the following 71-residue polypeptide: Large ribosomal subunit protein uL29 (71 aa).

Belongs to the universal ribosomal protein uL29 family.

This is Large ribosomal subunit protein uL29 (rpl29) from Aeropyrum pernix (strain ATCC 700893 / DSM 11879 / JCM 9820 / NBRC 100138 / K1).